The primary structure comprises 150 residues: Large ribosomal subunit protein bL9 (150 aa).

The protein belongs to the bacterial ribosomal protein bL9 family.

Functionally, binds to the 23S rRNA. The chain is Large ribosomal subunit protein bL9 from Burkholderia mallei (strain NCTC 10247).